A 311-amino-acid chain; its full sequence is JNK1/MAPK8-associated membrane protein (311 aa).

Residues 1–57 (MAVDIQPACLGLYCGKTLLFKNGSTEIYGECGVCPRGQRTNAQKYCQPCTESPELYD) are Lumenal-facing. Asn22 is a glycosylation site (N-linked (GlcNAc...) asparagine). The chain crosses the membrane as a helical span at residues 58–78 (WLYLGFMAMLPLVLHWFFIEW). The Cytoplasmic segment spans residues 79–87 (YSGKKSSSA). A helical transmembrane segment spans residues 88–108 (LFQHITALFECSMAAIITLLV). Over 109–149 (SDPVGVLYIRSCRVLMLSDWYTMLYNPSPDYVTTVHCTHEA) the chain is Lumenal. Residues 150-170 (VYPLYTIVFIYYAFCLVLMML) form a helical membrane-spanning segment. Residues 171–188 (LRPLLVKKIACGLGKSDR) lie on the Cytoplasmic side of the membrane. The helical transmembrane segment at 189–209 (FKSIYAALYFFPILTVLQAVG) threads the bilayer. A topological domain (lumenal) is located at residue Gly210. Residues 211–231 (GLLYYAFPYIILVLSLVTLAV) traverse the membrane as a helical segment. At 232 to 250 (YMSASEIENCYDLLVRKKR) the chain is on the cytoplasmic side. A helical transmembrane segment spans residues 251–271 (LIVLFSHWLLHAYGIISISRV). Residues 272–277 (DKLEQD) are Lumenal-facing. The chain crosses the membrane as a helical span at residues 278 to 298 (LPLLALVPTPALFYLFTAKFT). The Cytoplasmic segment spans residues 299 to 311 (EPSRILSEGANGH).

In terms of assembly, interacts with RNF5 and MAPK8, but not with MAPK9. Binding to MAPK8 occurs before and after exposure to stress, such as UV irradiation. After exposure to stress, interacts with phosphorylated MAPK8. Competes with DUSP10 for MAPK8 binding. Associates with multiple components of the proteasome and with ERAD regulatory proteins including AMFR/GP78, CANX, PSMC1, PSMC2, PSMC3/TBP1, PSMC5, PSMC6, PSMD8, SEC61-ALPHA and UFD1. Interacts with DERL1 (in the presence of misfolded protein CFTR(F508del)). In terms of processing, ubiquitinated by RNF5 via 'Lys-63'-linked ubiquitin linkage in a UBE2N-dependent manner. Ubiquitination decreases association with components of the proteasome and ERAD.

Its subcellular location is the endoplasmic reticulum membrane. Its function is as follows. Regulates the duration of MAPK8 activity in response to various stress stimuli. Facilitates degradation of misfolded endoplasmic reticulum (ER) proteins through the recruitment of components of the proteasome and endoplasmic reticulum-associated degradation (ERAD) system. This chain is JNK1/MAPK8-associated membrane protein (JKAMP), found in Homo sapiens (Human).